The chain runs to 233 residues: Sugar fermentation stimulation protein homolog (233 aa).

The protein belongs to the SfsA family.

The chain is Sugar fermentation stimulation protein homolog from Teredinibacter turnerae (strain ATCC 39867 / T7901).